The sequence spans 305 residues: MENIQERGHLLTEQINPNSQNLDQLSTVELVDLFNTEDAQTLKAIAQARIELAQAIDVTSKALGKGGRLFYVGAGTSGRLGVLDAAECPPTFCTDPDMVQGIIAGGAAALVRSSENLEDRPQDGAEAIAGRKVTEKDVVVGISAGGTTPYVHGALNAAKQRGATTIAMACVPAEQVPIVVDIDIRLLTGPEVLAGSTRLKAGTVTKMALNILSTGVMVKLGKVYGNRMIDVSVTNTKLYDRALRILEELTELSRQEAAELLDRSGKRVKLALLMHWAELDAEVGQLLLDNHHGNLRAALQAGQNS.

An SIS domain is found at 59-222 (TSKALGKGGR…STGVMVKLGK (164 aa)). The active-site Proton donor is glutamate 87. Glutamate 118 is a catalytic residue.

Belongs to the GCKR-like family. MurNAc-6-P etherase subfamily. In terms of assembly, homodimer.

The catalysed reaction is N-acetyl-D-muramate 6-phosphate + H2O = N-acetyl-D-glucosamine 6-phosphate + (R)-lactate. It participates in amino-sugar metabolism; N-acetylmuramate degradation. Its function is as follows. Specifically catalyzes the cleavage of the D-lactyl ether substituent of MurNAc 6-phosphate, producing GlcNAc 6-phosphate and D-lactate. This is N-acetylmuramic acid 6-phosphate etherase from Crocosphaera subtropica (strain ATCC 51142 / BH68) (Cyanothece sp. (strain ATCC 51142)).